The primary structure comprises 94 residues: HssA/B-like protein 51 (94 aa).

The segment at 1–25 (MTLFSSISSISNPMTNSKSRISSFG) is disordered.

The protein belongs to the hssA/B family.

This chain is HssA/B-like protein 51 (hssl51), found in Dictyostelium discoideum (Social amoeba).